We begin with the raw amino-acid sequence, 429 residues long: UDP-N-acetylglucosamine 1-carboxyvinyltransferase (429 aa).

22 to 23 (KN) contacts phosphoenolpyruvate. Residue arginine 102 coordinates UDP-N-acetyl-alpha-D-glucosamine. Cysteine 126 functions as the Proton donor in the catalytic mechanism. The residue at position 126 (cysteine 126) is a 2-(S-cysteinyl)pyruvic acid O-phosphothioketal. UDP-N-acetyl-alpha-D-glucosamine is bound by residues 131-135 (RPVDL), aspartate 316, and isoleucine 338.

Belongs to the EPSP synthase family. MurA subfamily.

It is found in the cytoplasm. The catalysed reaction is phosphoenolpyruvate + UDP-N-acetyl-alpha-D-glucosamine = UDP-N-acetyl-3-O-(1-carboxyvinyl)-alpha-D-glucosamine + phosphate. The protein operates within cell wall biogenesis; peptidoglycan biosynthesis. In terms of biological role, cell wall formation. Adds enolpyruvyl to UDP-N-acetylglucosamine. The protein is UDP-N-acetylglucosamine 1-carboxyvinyltransferase of Rhodopseudomonas palustris (strain BisB5).